Here is a 1155-residue protein sequence, read N- to C-terminus: MSLRFIVGRAGSGKSHSCLEEVRQRLRQNQGESSIILLVPEQATFQYEYMLATTPELKGMIWAQVLSFRRLAFRVLQEMGGAARAHIDDLGKKMVLRRILEQRKSELKVFHRAAKQPGFADSLASALSELKLYRIEPQELQKGIQHMQEAPGSAIRDKLADLSLLYNDLEEFLSGRFTDPDDYLNLLAQRLPGSRTVQGAEIFIDGFTGFTPQEYGVIEQMLGTADRVHVALCFDPMYLQEPCDELEFFYPTVETYHTLLDMAGALRISLEPPIICGKETPVRFQKDSAIAHLEKYYFRHPLQASDAAQGVSLVACANRRAEVEAAAREIIRLCREEELSWRDIVVVLRDLTNYSDLINTIFNDHGIPVFIDEKRNVLHHPLVELIRSALEVITQHWAYDPVFRYLKTDLIPVQRDDVDRLENYVLAHGIRGNRWNDNRDWTYRRQYTLGEDCDIDDNEAEQLAQLNVVRYAAIEHINNFSKKVANCGNVRQITTALFELLESLSVAERMEAWAKEAEVAGRLIEAKEHAQIWDNVILLLDEIVEAMGEQELNLEEYLQVLEAGLESLKLGLIPPGLDQVVVGTLERSRNPNVKAALVLGISDGVLPARPVEEGLFSDYEREALREIGLNLAPGARRKLFDEQYLIYTALTRASSRLWLSYPQADDEGKALMPSPVIQRVKELLPLIQEEILPVEPPCLGGDLAFIANPSRSLSYLAAMLRETVAGRLVDPVWQDVYSWFVQQPQYQESCRRVLAGLYHVNQETSLPPSMGRRLYGSRLRASVSRLERFTTCPFSHFLSHGLKLKERSQFKLAAPDLGQFFHAALKLFAERIKALSLDWGQLSRGQIITITGEIVEELAPQLQNEILLSTARHRYLIKKLRRTLERAVVTLAEHARRGSFRPVAVEIGFGDNAELPAVQLDLADHCQMEMAGRIDRIDSACEGGQHYYSLIDYKSGQPDIKLADIVHGLKLQLLTYLDVALRYSKQLTQQEALPAAMLYFSVRDPFVASTGPMTEEEAEKNLLKQLKMKGLLLADPLVISKMDKELSGQSDLLPVGLKKNGDFYSNSRVITEEQFKLLRNYLEFKLKSIGQQMVSGDIAISPYQRGKEKACRYCIFKSVCQFDPLLEDNLFRLLADQEEQVLWSLIKESLGDKHE.

One can recognise a UvrD-like helicase ATP-binding domain in the interval 1–300 (MSLRFIVGRA…AHLEKYYFRH (300 aa)). Position 8–15 (8–15 (GRAGSGKS)) interacts with ATP. The UvrD-like helicase C-terminal domain maps to 280–590 (TPVRFQKDSA…VVGTLERSRN (311 aa)). Cys-792, Cys-1111, Cys-1114, and Cys-1120 together coordinate [4Fe-4S] cluster.

It belongs to the helicase family. AddB/RexB type 1 subfamily. Heterodimer of AddA and AddB. It depends on Mg(2+) as a cofactor. The cofactor is [4Fe-4S] cluster.

The heterodimer acts as both an ATP-dependent DNA helicase and an ATP-dependent, dual-direction single-stranded exonuclease. Recognizes the chi site generating a DNA molecule suitable for the initiation of homologous recombination. The AddB subunit has 5' -&gt; 3' nuclease activity but not helicase activity. The sequence is that of ATP-dependent helicase/deoxyribonuclease subunit B from Desulforamulus reducens (strain ATCC BAA-1160 / DSM 100696 / MI-1) (Desulfotomaculum reducens).